Reading from the N-terminus, the 412-residue chain is Multifunctional CCA protein (412 aa).

ATP contacts are provided by glycine 8 and arginine 11. Residues glycine 8 and arginine 11 each contribute to the CTP site. Positions 21 and 23 each coordinate Mg(2+). The ATP site is built by arginine 91, arginine 137, and arginine 140. CTP-binding residues include arginine 91, arginine 137, and arginine 140. The HD domain occupies 228 to 329 (TGIHTLMTLA…LKLFNAIDVW (102 aa)).

The protein belongs to the tRNA nucleotidyltransferase/poly(A) polymerase family. Bacterial CCA-adding enzyme type 1 subfamily. As to quaternary structure, monomer. Can also form homodimers and oligomers. The cofactor is Mg(2+). Ni(2+) serves as cofactor.

The catalysed reaction is a tRNA precursor + 2 CTP + ATP = a tRNA with a 3' CCA end + 3 diphosphate. The enzyme catalyses a tRNA with a 3' CCA end + 2 CTP + ATP = a tRNA with a 3' CCACCA end + 3 diphosphate. Its function is as follows. Catalyzes the addition and repair of the essential 3'-terminal CCA sequence in tRNAs without using a nucleic acid template. Adds these three nucleotides in the order of C, C, and A to the tRNA nucleotide-73, using CTP and ATP as substrates and producing inorganic pyrophosphate. tRNA 3'-terminal CCA addition is required both for tRNA processing and repair. Also involved in tRNA surveillance by mediating tandem CCA addition to generate a CCACCA at the 3' terminus of unstable tRNAs. While stable tRNAs receive only 3'-terminal CCA, unstable tRNAs are marked with CCACCA and rapidly degraded. The protein is Multifunctional CCA protein of Yersinia pestis.